A 161-amino-acid polypeptide reads, in one-letter code: DNA-directed RNA polymerase 18 kDa subunit (161 aa).

This sequence belongs to the poxviridae DNA-directed RNA polymerase 18 kDa subunit family. In terms of assembly, the DNA-dependent RNA polymerase used for intermediate and late genes expression consists of eight subunits Rpo30/OPG66, Rpo7/OPG90, Rpo22/OPG103, Rpo147/OPG105, Rpo18/OPG119, Rpo19/OPG131, Rpo132/OPG151 and Rpo35/OPG156. The same holoenzyme, with the addition of the transcription-specificity factor OPG109, is used for early gene expression. In terms of processing, apparently non-glycosylated.

The protein resides in the virion. The enzyme catalyses RNA(n) + a ribonucleoside 5'-triphosphate = RNA(n+1) + diphosphate. Its function is as follows. Part of the DNA-dependent RNA polymerase which catalyzes the transcription of viral DNA into RNA using the four ribonucleoside triphosphates as substrates. Responsible for the transcription of early, intermediate and late genes. DNA-dependent RNA polymerase associates with the early transcription factor (ETF), itself composed of OPG118 and OPG133, thereby allowing the early genes transcription. Late transcription, and probably also intermediate transcription, require newly synthesized RNA polymerase. In Cynomys gunnisoni (Gunnison's prairie dog), this protein is DNA-directed RNA polymerase 18 kDa subunit (OPG119).